The following is a 238-amino-acid chain: Urease subunit alpha (238 aa).

The urease gamma stretch occupies residues 1 to 102; the sequence is MKLTPKELDK…LVTVHTPIEA (102 aa). A urease beta region spans residues 103-238; that stretch reads NGKLVPGELF…DDNYVKTIKE (136 aa).

It in the N-terminal section; belongs to the urease gamma subunit family. In the C-terminal section; belongs to the urease beta subunit family. As to quaternary structure, heterohexamer of 3 UreA (alpha) and 3 UreB (beta) subunits.

The protein localises to the cytoplasm. The enzyme catalyses urea + 2 H2O + H(+) = hydrogencarbonate + 2 NH4(+). Its pathway is nitrogen metabolism; urea degradation; CO(2) and NH(3) from urea (urease route): step 1/1. The sequence is that of Urease subunit alpha from Helicobacter pylori (strain P12).